The following is a 377-amino-acid chain: uncharacterized protein (377 aa).

The N-terminal stretch at 1–22 (MKFKYGTVVLGSFLGLSVVLAA) is a signal peptide. A lipid anchor (N-palmitoyl cysteine) is attached at Cys23. Cys23 is lipidated: S-diacylglycerol cysteine. Residues 217-260 (AKANGETNQKGRKAAKSNKTALVQLKNGADTTTNEENKDTKTSD) form a disordered region. The span at 251–260 (EENKDTKTSD) shows a compositional bias: basic and acidic residues.

It belongs to the MG185/MG260 family.

It is found in the cell membrane. This is an uncharacterized protein from Mycoplasma pneumoniae (strain ATCC 29342 / M129 / Subtype 1) (Mycoplasmoides pneumoniae).